An 86-amino-acid polypeptide reads, in one-letter code: Small ribosomal subunit protein bS20 (86 aa).

The span at 1–11 (MANIKSQIKRN) shows a compositional bias: polar residues. The disordered stretch occupies residues 1 to 20 (MANIKSQIKRNLTNEKRHQA).

The protein belongs to the bacterial ribosomal protein bS20 family.

In terms of biological role, binds directly to 16S ribosomal RNA. The protein is Small ribosomal subunit protein bS20 of Acholeplasma laidlawii (strain PG-8A).